Reading from the N-terminus, the 147-residue chain is Cyanate hydratase (147 aa).

Residues Arg88, Glu91, and Ser114 contribute to the active site.

The protein belongs to the cyanase family.

It carries out the reaction cyanate + hydrogencarbonate + 3 H(+) = NH4(+) + 2 CO2. Its function is as follows. Catalyzes the reaction of cyanate with bicarbonate to produce ammonia and carbon dioxide. The protein is Cyanate hydratase of Polaromonas sp. (strain JS666 / ATCC BAA-500).